The chain runs to 329 residues: N-acetyl-gamma-glutamyl-phosphate reductase (329 aa).

The active site involves C155.

This sequence belongs to the NAGSA dehydrogenase family. Type 1 subfamily.

The protein resides in the cytoplasm. The catalysed reaction is N-acetyl-L-glutamate 5-semialdehyde + phosphate + NADP(+) = N-acetyl-L-glutamyl 5-phosphate + NADPH + H(+). It functions in the pathway amino-acid biosynthesis; L-arginine biosynthesis; N(2)-acetyl-L-ornithine from L-glutamate: step 3/4. Its function is as follows. Catalyzes the NADPH-dependent reduction of N-acetyl-5-glutamyl phosphate to yield N-acetyl-L-glutamate 5-semialdehyde. This Shewanella pealeana (strain ATCC 700345 / ANG-SQ1) protein is N-acetyl-gamma-glutamyl-phosphate reductase.